Reading from the N-terminus, the 317-residue chain is Ribosomal protein L11 methyltransferase (317 aa).

Thr-158, Gly-179, Asp-201, and Asn-244 together coordinate S-adenosyl-L-methionine.

This sequence belongs to the methyltransferase superfamily. PrmA family.

It localises to the cytoplasm. It catalyses the reaction L-lysyl-[protein] + 3 S-adenosyl-L-methionine = N(6),N(6),N(6)-trimethyl-L-lysyl-[protein] + 3 S-adenosyl-L-homocysteine + 3 H(+). Its function is as follows. Methylates ribosomal protein L11. The sequence is that of Ribosomal protein L11 methyltransferase from Streptococcus pyogenes serotype M4 (strain MGAS10750).